The primary structure comprises 282 residues: Probable iron transport system membrane protein HI_0360 (282 aa).

8 helical membrane-spanning segments follow: residues 17-37, 63-83, 93-113, 140-160, 164-184, 186-206, 223-243, and 245-265; these read AMILSTAVGGICAFLSSYLML, LPYALGAFFAGILAALSILWI, AVIGFIFSTFFALGLLIVSLN, IIIGVCLVLLLLFWKDLLLIF, TQAITVGLSPLFYKILFFTLL, ACVVAALQTVGAILVIAMVVT, IIAIILGAVTSFVGVYISYYL, and GATGGVIVTLQTLLFLVAFLF.

Belongs to the ABC-3 integral membrane protein family.

It localises to the cell inner membrane. Functionally, part of an ATP-driven transport system HI_0359/HI_0360/HI_0361/HI_0362 for iron. The polypeptide is Probable iron transport system membrane protein HI_0360 (Haemophilus influenzae (strain ATCC 51907 / DSM 11121 / KW20 / Rd)).